Here is a 351-residue protein sequence, read N- to C-terminus: Major capsid protein (351 aa).

It belongs to the baculoviridae p39 family.

Its subcellular location is the virion. The polypeptide is Major capsid protein (P39) (Orgyia pseudotsugata (Douglas-fir tussock moth)).